The following is a 348-amino-acid chain: Dihydroorotase (348 aa).

2 residues coordinate Zn(2+): His-17 and His-19. Substrate is bound by residues 19-21 and Asn-45; that span reads HLR. Lys-103, His-140, and His-178 together coordinate Zn(2+). Lys-103 is subject to N6-carboxylysine. His-140 contacts substrate. A substrate-binding site is contributed by Leu-223. Zn(2+) is bound at residue Asp-251. Asp-251 is a catalytic residue. Positions 255 and 267 each coordinate substrate.

The protein belongs to the metallo-dependent hydrolases superfamily. DHOase family. Class II DHOase subfamily. In terms of assembly, homodimer. Zn(2+) is required as a cofactor.

It carries out the reaction (S)-dihydroorotate + H2O = N-carbamoyl-L-aspartate + H(+). It functions in the pathway pyrimidine metabolism; UMP biosynthesis via de novo pathway; (S)-dihydroorotate from bicarbonate: step 3/3. Its function is as follows. Catalyzes the reversible cyclization of carbamoyl aspartate to dihydroorotate. The chain is Dihydroorotase from Salmonella agona (strain SL483).